Reading from the N-terminus, the 98-residue chain is MLSISMNMTLAFTTALLGMLMFRSHLMSSLLCLEGMMLSMFILSTLLILNMQYTITFMMPILLLVFAACEAAIGLALLVTVSNTYGLDYIQNLNLLQC.

Helical transmembrane passes span 29–49 (SLLC…LLIL) and 61–81 (ILLL…LVTV).

It belongs to the complex I subunit 4L family. In terms of assembly, core subunit of respiratory chain NADH dehydrogenase (Complex I) which is composed of 45 different subunits.

It is found in the mitochondrion inner membrane. The enzyme catalyses a ubiquinone + NADH + 5 H(+)(in) = a ubiquinol + NAD(+) + 4 H(+)(out). Its function is as follows. Core subunit of the mitochondrial membrane respiratory chain NADH dehydrogenase (Complex I) which catalyzes electron transfer from NADH through the respiratory chain, using ubiquinone as an electron acceptor. Part of the enzyme membrane arm which is embedded in the lipid bilayer and involved in proton translocation. This chain is NADH-ubiquinone oxidoreductase chain 4L (MT-ND4L), found in Cheirogaleus medius (Fat-tailed dwarf lemur).